The primary structure comprises 130 residues: Small ribosomal subunit protein uS8 (130 aa).

The protein belongs to the universal ribosomal protein uS8 family. As to quaternary structure, part of the 30S ribosomal subunit. Contacts proteins S5 and S12.

In terms of biological role, one of the primary rRNA binding proteins, it binds directly to 16S rRNA central domain where it helps coordinate assembly of the platform of the 30S subunit. This Shewanella denitrificans (strain OS217 / ATCC BAA-1090 / DSM 15013) protein is Small ribosomal subunit protein uS8.